Reading from the N-terminus, the 146-residue chain is VHLTGEEKSGLTALWAKVNVEEIGGEALGRLLVVYPWTQRFFEHFGDLSTADAVMKNPKVKKHGQKVLASFGEGLKHLDNLKGTFATLSELHCDKLHVDPENFRLLGNVLVVVLARHFGKEFTPELQTAYQKVVAGVANALAHKYH.

Position 1 is an N-acetylvaline (Val-1). The 145-residue stretch at 2–146 folds into the Globin domain; that stretch reads HLTGEEKSGL…VANALAHKYH (145 aa). Phosphothreonine is present on Thr-12. N6-acetyllysine is present on Lys-59. His-63 contributes to the heme b binding site. Lys-82 carries the N6-acetyllysine modification. Residue His-92 coordinates heme b. The residue at position 93 (Cys-93) is an S-nitrosocysteine. Lys-144 is subject to N6-acetyllysine.

This sequence belongs to the globin family. As to quaternary structure, heterotetramer of two alpha chains and two beta chains. Red blood cells.

In terms of biological role, involved in oxygen transport from the lung to the various peripheral tissues. The protein is Hemoglobin subunit beta-1/2 (HBB) of Physeter macrocephalus (Sperm whale).